The following is a 516-amino-acid chain: Cytochrome P450 1A1 (516 aa).

The mitochondrial targeting signal stretch occupies residues 33 to 44; that stretch reads WQPRVPKGLKSP. S71 is a glycosylation site (O-linked (GlcNAc) serine). F228 provides a ligand contact to substrate. C461 contacts heme.

Belongs to the cytochrome P450 family. In terms of assembly, interacts with cytosolic chaperones HSP70 and HSP90; this interaction is required for initial targeting to mitochondria. Interacts (via mitochondrial targeting signal) with TOMM40 (via N-terminus); this interaction is required for translocation across the mitochondrial outer membrane. The cofactor is heme.

The protein resides in the endoplasmic reticulum membrane. The protein localises to the mitochondrion inner membrane. It is found in the microsome membrane. Its subcellular location is the cytoplasm. The enzyme catalyses an organic molecule + reduced [NADPH--hemoprotein reductase] + O2 = an alcohol + oxidized [NADPH--hemoprotein reductase] + H2O + H(+). It carries out the reaction estrone + reduced [NADPH--hemoprotein reductase] + O2 = 2-hydroxyestrone + oxidized [NADPH--hemoprotein reductase] + H2O + H(+). The catalysed reaction is estrone + reduced [NADPH--hemoprotein reductase] + O2 = 4-hydroxyestrone + oxidized [NADPH--hemoprotein reductase] + H2O + H(+). It catalyses the reaction estrone + reduced [NADPH--hemoprotein reductase] + O2 = 6alpha-hydroxyestrone + oxidized [NADPH--hemoprotein reductase] + H2O + H(+). The enzyme catalyses estrone + reduced [NADPH--hemoprotein reductase] + O2 = 15alpha-hydroxyestrone + oxidized [NADPH--hemoprotein reductase] + H2O + H(+). It carries out the reaction estrone + reduced [NADPH--hemoprotein reductase] + O2 = 16alpha-hydroxyestrone + oxidized [NADPH--hemoprotein reductase] + H2O + H(+). The catalysed reaction is 17beta-estradiol + reduced [NADPH--hemoprotein reductase] + O2 = 2-hydroxy-17beta-estradiol + oxidized [NADPH--hemoprotein reductase] + H2O + H(+). It catalyses the reaction 17beta-estradiol + reduced [NADPH--hemoprotein reductase] + O2 = 4-hydroxy-17beta-estradiol + oxidized [NADPH--hemoprotein reductase] + H2O + H(+). The enzyme catalyses 17beta-estradiol + reduced [NADPH--hemoprotein reductase] + O2 = 6alpha-hydroxy-17beta-estradiol + oxidized [NADPH--hemoprotein reductase] + H2O + H(+). It carries out the reaction 17beta-estradiol + reduced [NADPH--hemoprotein reductase] + O2 = 7alpha-hydroxy-17beta-estradiol + oxidized [NADPH--hemoprotein reductase] + H2O + H(+). The catalysed reaction is 17beta-estradiol + reduced [NADPH--hemoprotein reductase] + O2 = 15alpha-hydroxy-17beta-estradiol + oxidized [NADPH--hemoprotein reductase] + H2O + H(+). It catalyses the reaction (5Z,8Z,11Z)-eicosatrienoate + reduced [NADPH--hemoprotein reductase] + O2 = 19-hydroxy-(5Z,8Z,11Z)-eicosatrienoate + oxidized [NADPH--hemoprotein reductase] + H2O + H(+). The enzyme catalyses (5Z,8Z,11Z,14Z)-eicosatetraenoate + reduced [NADPH--hemoprotein reductase] + O2 = 16-hydroxy-(5Z,8Z,11Z,14Z)-eicosatetraenoate + oxidized [NADPH--hemoprotein reductase] + H2O + H(+). It carries out the reaction (5Z,8Z,11Z,14Z)-eicosatetraenoate + reduced [NADPH--hemoprotein reductase] + O2 = 17-hydroxy-(5Z,8Z,11Z,14Z)-eicosatetraenoate + oxidized [NADPH--hemoprotein reductase] + H2O + H(+). The catalysed reaction is (5Z,8Z,11Z,14Z)-eicosatetraenoate + reduced [NADPH--hemoprotein reductase] + O2 = 18-hydroxy-(5Z,8Z,11Z,14Z)-eicosatetraenoate + oxidized [NADPH--hemoprotein reductase] + H2O + H(+). It catalyses the reaction (5Z,8Z,11Z,14Z)-eicosatetraenoate + reduced [NADPH--hemoprotein reductase] + O2 = 19-hydroxy-(5Z,8Z,11Z,14Z)-eicosatetraenoate + oxidized [NADPH--hemoprotein reductase] + H2O + H(+). The enzyme catalyses (5Z,8Z,11Z,14Z,17Z)-eicosapentaenoate + reduced [NADPH--hemoprotein reductase] + O2 = 19-hydroxy-(5Z,8Z,11Z,14Z,17Z)-eicosapentaenoate + oxidized [NADPH--hemoprotein reductase] + H2O + H(+). It carries out the reaction (5Z,8Z,11Z,14Z)-eicosatetraenoate + reduced [NADPH--hemoprotein reductase] + O2 = (8R,9S)-epoxy-(5Z,11Z,14Z)-eicosatrienoate + oxidized [NADPH--hemoprotein reductase] + H2O + H(+). The catalysed reaction is (5Z,8Z,11Z,14Z)-eicosatetraenoate + reduced [NADPH--hemoprotein reductase] + O2 = (11R,12S)-epoxy-(5Z,8Z,14Z)-eicosatrienoate + oxidized [NADPH--hemoprotein reductase] + H2O + H(+). It catalyses the reaction (5Z,8Z,11Z,14Z)-eicosatetraenoate + reduced [NADPH--hemoprotein reductase] + O2 = (14S,15R)-epoxy-(5Z,8Z,11Z)-eicosatrienoate + oxidized [NADPH--hemoprotein reductase] + H2O + H(+). The enzyme catalyses (5Z,8Z,11Z,14Z)-eicosatetraenoate + reduced [NADPH--hemoprotein reductase] + O2 = (14R,15S)-epoxy-(5Z,8Z,11Z)-eicosatrienoate + oxidized [NADPH--hemoprotein reductase] + H2O + H(+). It carries out the reaction (5Z,8Z,11Z,14Z,17Z)-eicosapentaenoate + reduced [NADPH--hemoprotein reductase] + O2 = (17R,18S)-epoxy-(5Z,8Z,11Z,14Z)-eicosatetraenoate + oxidized [NADPH--hemoprotein reductase] + H2O + H(+). The catalysed reaction is (4Z,7Z,10Z,13Z,16Z,19Z)-docosahexaenoate + reduced [NADPH--hemoprotein reductase] + O2 = (19S,20R)-epoxy-(4Z,7Z,10Z,13Z,16Z)-docosapentaenoate + oxidized [NADPH--hemoprotein reductase] + H2O + H(+). It catalyses the reaction (4Z,7Z,10Z,13Z,16Z,19Z)-docosahexaenoate + reduced [NADPH--hemoprotein reductase] + O2 = (19R,20S)-epoxy-(4Z,7Z,10Z,13Z,16Z)-docosapentaenoate + oxidized [NADPH--hemoprotein reductase] + H2O + H(+). The enzyme catalyses all-trans-retinol + reduced [NADPH--hemoprotein reductase] + O2 = all-trans-retinal + oxidized [NADPH--hemoprotein reductase] + 2 H2O + H(+). It carries out the reaction all-trans-retinal + reduced [NADPH--hemoprotein reductase] + O2 = all-trans-retinoate + oxidized [NADPH--hemoprotein reductase] + H2O + 2 H(+). The catalysed reaction is (13S)-hydroperoxy-(9Z,11E)-octadecadienoate = 13-oxo-(9Z,11E)-octadecadienoate + H2O. It catalyses the reaction (12S)-hydroperoxy-(5Z,8Z,10E,14Z)-eicosatetraenoate = 12-oxo-(5Z,8Z,10E,14Z)-eicosatetraenoate + H2O. The enzyme catalyses (15S)-hydroperoxy-(5Z,8Z,11Z,13E)-eicosatetraenoate = 15-oxo-(5Z,8Z,11Z,13E)-eicosatetraenoate + H2O. It carries out the reaction (5S)-hydroperoxy-(6E,8Z,11Z,14Z)-eicosatetraenoate = 5-oxo-(6E,8Z,11Z,14Z)-eicosatetraenoate + H2O. It functions in the pathway steroid hormone biosynthesis. Its pathway is lipid metabolism; fatty acid metabolism. It participates in cofactor metabolism; retinol metabolism. A cytochrome P450 monooxygenase involved in the metabolism of various endogenous substrates, including fatty acids, steroid hormones and vitamins. Mechanistically, uses molecular oxygen inserting one oxygen atom into a substrate, and reducing the second into a water molecule, with two electrons provided by NADPH via cytochrome P450 reductase (CPR; NADPH-ferrihemoprotein reductase). Catalyzes the hydroxylation of carbon-hydrogen bonds. Exhibits high catalytic activity for the formation of hydroxyestrogens from estrone (E1) and 17beta-estradiol (E2), namely 2-hydroxy E1 and E2, as well as D-ring hydroxylated E1 and E2 at the C15alpha and C16alpha positions. Displays different regioselectivities for polyunsaturated fatty acids (PUFA) hydroxylation. Catalyzes the epoxidation of double bonds of certain PUFA. Converts arachidonic acid toward epoxyeicosatrienoic acid (EET) regioisomers, 8,9-, 11,12-, and 14,15-EET, that function as lipid mediators in the vascular system. Displays an absolute stereoselectivity in the epoxidation of eicosapentaenoic acid (EPA) producing the 17(R),18(S) enantiomer. May play an important role in all-trans retinoic acid biosynthesis in extrahepatic tissues. Catalyzes two successive oxidative transformation of all-trans retinol to all-trans retinal and then to the active form all-trans retinoic acid. May also participate in eicosanoids metabolism by converting hydroperoxide species into oxo metabolites (lipoxygenase-like reaction, NADPH-independent). In Balaenoptera acutorostrata (Common minke whale), this protein is Cytochrome P450 1A1 (CYP1A1).